Here is a 638-residue protein sequence, read N- to C-terminus: UvrABC system protein C (638 aa).

A GIY-YIG domain is found at 20–97; sequence ECAGVYQMFD…IKKFQPKFNI (78 aa). The UVR domain occupies 209 to 244; the sequence is KELQENLSKKMEELSSHMYFEEAAEIRDRIKALSYV.

This sequence belongs to the UvrC family. As to quaternary structure, interacts with UvrB in an incision complex.

It is found in the cytoplasm. Its function is as follows. The UvrABC repair system catalyzes the recognition and processing of DNA lesions. UvrC both incises the 5' and 3' sides of the lesion. The N-terminal half is responsible for the 3' incision and the C-terminal half is responsible for the 5' incision. The polypeptide is UvrABC system protein C (Rickettsia canadensis (strain McKiel)).